Reading from the N-terminus, the 710-residue chain is Putative transmembrane protein ORF710 (710 aa).

An N-terminal signal peptide occupies residues 1–33 (MKLDRKKKRLLLKTIFSIVILILPLTFLHPTNS). Transmembrane regions (helical) follow at residues 41-61 (VPIQ…TAPL), 76-95 (YGTL…VVWY), and 689-709 (VAIV…IFAI).

The protein localises to the host membrane. In Acidianus convivator (ATV), this protein is Putative transmembrane protein ORF710.